The following is a 137-amino-acid chain: Protein phosphatase 1 regulatory subunit 1B (137 aa).

Residues 1-137 (DPKDRKKIQF…EEEEEEEDSQ (137 aa)) form a disordered region. The residue at position 33 (threonine 33) is a Phosphothreonine; by PKA. Over residues 40-62 (LXEHSSPEEEASPHQRAAGEGHH) the composition is skewed to basic and acidic residues. 2 positions are modified to phosphoserine: serine 44 and serine 45. Residue threonine 74 is modified to Phosphothreonine; by CDK5. Positions 88–99 (HLQSISNLGENQ) are enriched in polar residues. Position 101 is a phosphoserine (serine 101). Over residues 108-117 (GELRELGYPR) the composition is skewed to basic and acidic residues. Over residues 118–137 (EEEEEEEEDDEEEEEEEDSQ) the composition is skewed to acidic residues. Serine 136 bears the Phosphoserine mark.

The protein belongs to the protein phosphatase inhibitor 1 family. In terms of processing, phosphorylation of Thr-33 is required for activity. Post-translationally, dopamine- and cyclic AMP-regulated neuronal phosphoprotein.

It is found in the cytoplasm. Functionally, inhibitor of protein-phosphatase 1. This chain is Protein phosphatase 1 regulatory subunit 1B (PPP1R1B), found in Sus scrofa (Pig).